We begin with the raw amino-acid sequence, 225 residues long: Uracil-DNA glycosylase (225 aa).

Asp-65 (proton acceptor) is an active-site residue.

This sequence belongs to the uracil-DNA glycosylase (UDG) superfamily. UNG family.

It localises to the cytoplasm. It catalyses the reaction Hydrolyzes single-stranded DNA or mismatched double-stranded DNA and polynucleotides, releasing free uracil.. Functionally, excises uracil residues from the DNA which can arise as a result of misincorporation of dUMP residues by DNA polymerase or due to deamination of cytosine. The sequence is that of Uracil-DNA glycosylase from Bacillus cereus (strain B4264).